The primary structure comprises 776 residues: Protein translocase subunit SecA 2 (776 aa).

ATP contacts are provided by residues Gln-80, 98-102 (GEGKT), and Asp-486.

Belongs to the SecA family. As to quaternary structure, monomer and homodimer. Part of the essential Sec protein translocation apparatus which comprises SecA, SecYEG and auxiliary proteins SecDF. Other proteins may also be involved.

The protein localises to the cell membrane. Its subcellular location is the cytoplasm. The catalysed reaction is ATP + H2O + cellular proteinSide 1 = ADP + phosphate + cellular proteinSide 2.. Functionally, part of the Sec protein translocase complex. Interacts with the SecYEG preprotein conducting channel. Has a central role in coupling the hydrolysis of ATP to the transfer of proteins into and across the cell membrane, serving as an ATP-driven molecular motor driving the stepwise translocation of polypeptide chains across the membrane. In Listeria monocytogenes serotype 4b (strain F2365), this protein is Protein translocase subunit SecA 2.